The chain runs to 585 residues: uncharacterized protein (585 aa).

Positions 27 to 59 (DDSERSVKSVSVSISDDEDSKTDVQDNMATPST) are disordered.

This is an uncharacterized protein from Saccharomyces cerevisiae (strain ATCC 204508 / S288c) (Baker's yeast).